The sequence spans 515 residues: UBP3-associated protein BRE5 (515 aa).

Positions 8-140 (ICFAFLQNYY…FDITNDIIRF (133 aa)) constitute an NTF2 domain. Positions 157 to 166 (QSNEENSVSA) are enriched in low complexity. Disordered stretches follow at residues 157 to 410 (QSNE…PVFS) and 485 to 515 (KTVK…KRKD). A compositionally biased stretch (basic and acidic residues) spans 168-201 (EEDKIRHESGVEKEKEKEKSPEISKPKAKKETVK). The residue at position 187 (S187) is a Phosphoserine. Residues 202–213 (DTTAPTESSTQE) show a composition bias toward polar residues. Basic and acidic residues-rich tracts occupy residues 262–282 (LNEK…KEGS) and 299–319 (EVSD…EIKP). S282 carries the post-translational modification Phosphoserine. The segment covering 330 to 341 (SGNNASTPSSSP) has biased composition (polar residues). T336 carries the phosphothreonine modification. A Phosphoserine modification is found at S340. A compositionally biased stretch (basic and acidic residues) spans 374–396 (IRPETLPKKPTERKFEMGNRRDN). At S398 the chain carries Phosphoserine. In terms of domain architecture, RRM spans 418-494 (YPIYIRGTNG…KTVKKPTSNN (77 aa)). Polar residues predominate over residues 489–503 (KPTSNNPPGIFTNGT). Over residues 504 to 515 (RSHRKQPLKRKD) the composition is skewed to basic residues.

Heterotetramer with UBP3; contains two molecules of BRE5 and two molecules of UBP3. Forms a complex composed of CDC48, DOA1, deubiquitinase UBP3 and probably BRE5. Within the complex, interacts (via C-terminus) with CDC48; the interaction is direct and UBP3-independent.

Has a role in de-ubiquitination. In conjunction with UBP3, cleaves ubiquitin, leading to the subsequent mono-ubiquitination of sec23. In Saccharomyces cerevisiae (strain ATCC 204508 / S288c) (Baker's yeast), this protein is UBP3-associated protein BRE5 (BRE5).